The primary structure comprises 203 residues: NADH-ubiquinone oxidoreductase chain 6 (203 aa).

5 consecutive transmembrane segments (helical) span residues 16 to 36 (SNILDILAFISIILGIYTIVS), 40 to 60 (VVSVLFLIGLFSTISIYLIMI), 70 to 90 (LLVYIGAVSILFLFILMLINI), 102 to 122 (YIPLAILSMITLVYILGQKII), and 179 to 199 (WLIIISLILLLAMVGSIVISI).

The protein belongs to the complex I subunit 6 family.

The protein localises to the mitochondrion membrane. The enzyme catalyses a ubiquinone + NADH + 5 H(+)(in) = a ubiquinol + NAD(+) + 4 H(+)(out). Its function is as follows. Core subunit of the mitochondrial membrane respiratory chain NADH dehydrogenase (Complex I) that is believed to belong to the minimal assembly required for catalysis. Complex I functions in the transfer of electrons from NADH to the respiratory chain. The immediate electron acceptor for the enzyme is believed to be ubiquinone. This is NADH-ubiquinone oxidoreductase chain 6 (ND6) from Trichophyton rubrum (Athlete's foot fungus).